We begin with the raw amino-acid sequence, 214 residues long: Thiamine-phosphate synthase (214 aa).

Residues glutamine 37–lysine 41 and asparagine 73 contribute to the 4-amino-2-methyl-5-(diphosphooxymethyl)pyrimidine site. Mg(2+)-binding residues include aspartate 74 and aspartate 93. Position 112 (serine 112) interacts with 4-amino-2-methyl-5-(diphosphooxymethyl)pyrimidine. Threonine 139–serine 141 contacts 2-[(2R,5Z)-2-carboxy-4-methylthiazol-5(2H)-ylidene]ethyl phosphate. Lysine 142 serves as a coordination point for 4-amino-2-methyl-5-(diphosphooxymethyl)pyrimidine. 2-[(2R,5Z)-2-carboxy-4-methylthiazol-5(2H)-ylidene]ethyl phosphate contacts are provided by residues glycine 171 and isoleucine 191–serine 192.

It belongs to the thiamine-phosphate synthase family. Mg(2+) is required as a cofactor.

The enzyme catalyses 2-[(2R,5Z)-2-carboxy-4-methylthiazol-5(2H)-ylidene]ethyl phosphate + 4-amino-2-methyl-5-(diphosphooxymethyl)pyrimidine + 2 H(+) = thiamine phosphate + CO2 + diphosphate. It catalyses the reaction 2-(2-carboxy-4-methylthiazol-5-yl)ethyl phosphate + 4-amino-2-methyl-5-(diphosphooxymethyl)pyrimidine + 2 H(+) = thiamine phosphate + CO2 + diphosphate. It carries out the reaction 4-methyl-5-(2-phosphooxyethyl)-thiazole + 4-amino-2-methyl-5-(diphosphooxymethyl)pyrimidine + H(+) = thiamine phosphate + diphosphate. The protein operates within cofactor biosynthesis; thiamine diphosphate biosynthesis; thiamine phosphate from 4-amino-2-methyl-5-diphosphomethylpyrimidine and 4-methyl-5-(2-phosphoethyl)-thiazole: step 1/1. Its function is as follows. Condenses 4-methyl-5-(beta-hydroxyethyl)thiazole monophosphate (THZ-P) and 2-methyl-4-amino-5-hydroxymethyl pyrimidine pyrophosphate (HMP-PP) to form thiamine monophosphate (TMP). The sequence is that of Thiamine-phosphate synthase from Listeria monocytogenes serotype 4b (strain CLIP80459).